The following is a 53-amino-acid chain: Large ribosomal subunit protein eL40 (53 aa).

It belongs to the eukaryotic ribosomal protein eL40 family.

The protein is Large ribosomal subunit protein eL40 of Pyrobaculum neutrophilum (strain DSM 2338 / JCM 9278 / NBRC 100436 / V24Sta) (Thermoproteus neutrophilus).